Consider the following 253-residue polypeptide: 5'-nucleotidase SurE (253 aa).

A divalent metal cation contacts are provided by aspartate 8, aspartate 9, serine 40, and asparagine 93.

This sequence belongs to the SurE nucleotidase family. Requires a divalent metal cation as cofactor.

The protein resides in the cytoplasm. It carries out the reaction a ribonucleoside 5'-phosphate + H2O = a ribonucleoside + phosphate. Functionally, nucleotidase that shows phosphatase activity on nucleoside 5'-monophosphates. This is 5'-nucleotidase SurE from Haemophilus ducreyi (strain 35000HP / ATCC 700724).